The chain runs to 83 residues: Cell division topological specificity factor (83 aa).

The protein belongs to the MinE family.

Functionally, prevents the cell division inhibition by proteins MinC and MinD at internal division sites while permitting inhibition at polar sites. This ensures cell division at the proper site by restricting the formation of a division septum at the midpoint of the long axis of the cell. This chain is Cell division topological specificity factor, found in Buchnera aphidicola subsp. Baizongia pistaciae (strain Bp).